Consider the following 361-residue polypeptide: MMDSPKKLGYHMPAEYEPHHGTLMIWPIRPGSWPFQGKAAKRAFTQIIETIAEGERVYLLVEQAYLSEAQSYLGDKVVYLDIPTNDAWARDTGPTILVNDKGKKLAVDWAFNAWGGTYDGLYQDYEEDDQVASRFAEALERPVYDAKPFVLEGGAIHSDGQGTILVTESCLLSPGRNPNLTKEEIENTLLESLGAEKVIWLPYGIYQDETNEHVDNVVAFVGPAEVVLAWTDDENDPQYAMSKADLELLEQETDAKGCHFTIHKLPIPAVRQVVTEEDLPGYIYEEGEEERYAGERLAASYVNFYIANKAVLVPQFEDVNDQVALDILSKCFPDRKVVGIPARDILLGGGNIHCITQQIPE.

The active-site Amidino-cysteine intermediate is the cysteine 354.

The protein belongs to the agmatine deiminase family.

It carries out the reaction agmatine + H2O = N-carbamoylputrescine + NH4(+). The chain is Putative agmatine deiminase from Streptococcus pneumoniae (strain ATCC BAA-255 / R6).